The chain runs to 457 residues: Siroheme synthase (457 aa).

The tract at residues Met1–Thr204 is precorrin-2 dehydrogenase /sirohydrochlorin ferrochelatase. NAD(+) is bound by residues Asp22–Val23 and Leu43–Ala44. Ser128 carries the post-translational modification Phosphoserine. The tract at residues Gly216–His457 is uroporphyrinogen-III C-methyltransferase. Pro225 serves as a coordination point for S-adenosyl-L-methionine. The Proton acceptor role is filled by Asp248. Lys270 acts as the Proton donor in catalysis. S-adenosyl-L-methionine contacts are provided by residues Gly301–Asp303, Ile306, Thr331–Ala332, Met382, and Gly411.

This sequence in the N-terminal section; belongs to the precorrin-2 dehydrogenase / sirohydrochlorin ferrochelatase family. It in the C-terminal section; belongs to the precorrin methyltransferase family.

The enzyme catalyses uroporphyrinogen III + 2 S-adenosyl-L-methionine = precorrin-2 + 2 S-adenosyl-L-homocysteine + H(+). It carries out the reaction precorrin-2 + NAD(+) = sirohydrochlorin + NADH + 2 H(+). It catalyses the reaction siroheme + 2 H(+) = sirohydrochlorin + Fe(2+). The protein operates within cofactor biosynthesis; adenosylcobalamin biosynthesis; precorrin-2 from uroporphyrinogen III: step 1/1. It functions in the pathway cofactor biosynthesis; adenosylcobalamin biosynthesis; sirohydrochlorin from precorrin-2: step 1/1. It participates in porphyrin-containing compound metabolism; siroheme biosynthesis; precorrin-2 from uroporphyrinogen III: step 1/1. Its pathway is porphyrin-containing compound metabolism; siroheme biosynthesis; siroheme from sirohydrochlorin: step 1/1. The protein operates within porphyrin-containing compound metabolism; siroheme biosynthesis; sirohydrochlorin from precorrin-2: step 1/1. Its function is as follows. Multifunctional enzyme that catalyzes the SAM-dependent methylations of uroporphyrinogen III at position C-2 and C-7 to form precorrin-2 via precorrin-1. Then it catalyzes the NAD-dependent ring dehydrogenation of precorrin-2 to yield sirohydrochlorin. Finally, it catalyzes the ferrochelation of sirohydrochlorin to yield siroheme. In Shigella boydii serotype 18 (strain CDC 3083-94 / BS512), this protein is Siroheme synthase.